A 552-amino-acid polypeptide reads, in one-letter code: Arginine--tRNA ligase (552 aa).

The short motif at 130 to 140 is the 'HIGH' region element; that stretch reads ANPTGPIHLGG.

Belongs to the class-I aminoacyl-tRNA synthetase family. In terms of assembly, monomer.

The protein localises to the cytoplasm. The catalysed reaction is tRNA(Arg) + L-arginine + ATP = L-arginyl-tRNA(Arg) + AMP + diphosphate. In Nocardia farcinica (strain IFM 10152), this protein is Arginine--tRNA ligase.